The following is a 187-amino-acid chain: Adenylate kinase (187 aa).

10–15 (GSGKGT) contributes to the ATP binding site. The NMP stretch occupies residues 30 to 59 (STGDLLRSEVVAGTPLGLQAKQVMAQGDLV). AMP contacts are provided by residues Thr31, Arg36, 57–59 (DLV), 85–88 (GYPR), and Gln92. The LID stretch occupies residues 126–136 (GRAQAEGREDD). Arg127 provides a ligand contact to ATP. Arg133 and Arg144 together coordinate AMP. Gly172 contacts ATP.

The protein belongs to the adenylate kinase family. Monomer.

Its subcellular location is the cytoplasm. The catalysed reaction is AMP + ATP = 2 ADP. It functions in the pathway purine metabolism; AMP biosynthesis via salvage pathway; AMP from ADP: step 1/1. In terms of biological role, catalyzes the reversible transfer of the terminal phosphate group between ATP and AMP. Plays an important role in cellular energy homeostasis and in adenine nucleotide metabolism. The sequence is that of Adenylate kinase from Xylella fastidiosa (strain 9a5c).